The sequence spans 287 residues: Ribosomal RNA small subunit methyltransferase A (287 aa).

S-adenosyl-L-methionine is bound by residues Asn18, Leu20, Gly45, Glu66, Asp91, and Asn118.

Belongs to the class I-like SAM-binding methyltransferase superfamily. rRNA adenine N(6)-methyltransferase family. RsmA subfamily.

It localises to the cytoplasm. The enzyme catalyses adenosine(1518)/adenosine(1519) in 16S rRNA + 4 S-adenosyl-L-methionine = N(6)-dimethyladenosine(1518)/N(6)-dimethyladenosine(1519) in 16S rRNA + 4 S-adenosyl-L-homocysteine + 4 H(+). Specifically dimethylates two adjacent adenosines (A1518 and A1519) in the loop of a conserved hairpin near the 3'-end of 16S rRNA in the 30S particle. May play a critical role in biogenesis of 30S subunits. This Haemophilus influenzae (strain PittEE) protein is Ribosomal RNA small subunit methyltransferase A.